The primary structure comprises 602 residues: Elongation factor 4 (602 aa).

The 183-residue stretch at 7 to 189 (KYIRNFCIIA…KIVDMIPCPE (183 aa)) folds into the tr-type G domain. Residues 19 to 24 (DHGKST) and 136 to 139 (NKID) each bind GTP.

It belongs to the TRAFAC class translation factor GTPase superfamily. Classic translation factor GTPase family. LepA subfamily.

Its subcellular location is the cell membrane. The enzyme catalyses GTP + H2O = GDP + phosphate + H(+). Its function is as follows. Required for accurate and efficient protein synthesis under certain stress conditions. May act as a fidelity factor of the translation reaction, by catalyzing a one-codon backward translocation of tRNAs on improperly translocated ribosomes. Back-translocation proceeds from a post-translocation (POST) complex to a pre-translocation (PRE) complex, thus giving elongation factor G a second chance to translocate the tRNAs correctly. Binds to ribosomes in a GTP-dependent manner. The chain is Elongation factor 4 from Ruminiclostridium cellulolyticum (strain ATCC 35319 / DSM 5812 / JCM 6584 / H10) (Clostridium cellulolyticum).